Reading from the N-terminus, the 278-residue chain is Polyamine aminopropyltransferase (278 aa).

The 238-residue stretch at 3-240 (EGWFTEAVED…GWWSATLMVN (238 aa)) folds into the PABS domain. Gln-33 contributes to the S-methyl-5'-thioadenosine binding site. Positions 64 and 88 each coordinate spermidine. S-methyl-5'-thioadenosine-binding positions include Glu-108 and 139-140 (DG). Asp-158 acts as the Proton acceptor in catalysis. 158–161 (DSTD) contributes to the spermidine binding site. Residue Pro-165 coordinates S-methyl-5'-thioadenosine.

This sequence belongs to the spermidine/spermine synthase family. In terms of assembly, homodimer or homotetramer.

The protein localises to the cytoplasm. The enzyme catalyses S-adenosyl 3-(methylsulfanyl)propylamine + putrescine = S-methyl-5'-thioadenosine + spermidine + H(+). It participates in amine and polyamine biosynthesis; spermidine biosynthesis; spermidine from putrescine: step 1/1. Catalyzes the irreversible transfer of a propylamine group from the amino donor S-adenosylmethioninamine (decarboxy-AdoMet) to putrescine (1,4-diaminobutane) to yield spermidine. The sequence is that of Polyamine aminopropyltransferase from Halorhodospira halophila (strain DSM 244 / SL1) (Ectothiorhodospira halophila (strain DSM 244 / SL1)).